Here is a 374-residue protein sequence, read N- to C-terminus: Type IV secretion system protein PtlG homolog (374 aa).

Residues 38–56 (WMFALVAVALSCLLATGIW) traverse the membrane as a helical segment. The segment at 87-116 (PREPEPAPLPDMPAAPNPILPQPRPAPPVP) is disordered. Residues 92–116 (PAPLPDMPAAPNPILPQPRPAPPVP) are compositionally biased toward pro residues.

The protein belongs to the TrbI/VirB10 family.

The protein resides in the cell membrane. This is Type IV secretion system protein PtlG homolog (ptlG) from Bordetella parapertussis (strain 12822 / ATCC BAA-587 / NCTC 13253).